The chain runs to 308 residues: Aspartate carbamoyltransferase catalytic subunit (308 aa).

2 residues coordinate carbamoyl phosphate: Arg-57 and Thr-58. Lys-86 contributes to the L-aspartate binding site. Arg-107, His-135, and Gln-138 together coordinate carbamoyl phosphate. The L-aspartate site is built by Arg-168 and Arg-228. Positions 267 and 268 each coordinate carbamoyl phosphate.

It belongs to the aspartate/ornithine carbamoyltransferase superfamily. ATCase family. In terms of assembly, heterododecamer (2C3:3R2) of six catalytic PyrB chains organized as two trimers (C3), and six regulatory PyrI chains organized as three dimers (R2).

It catalyses the reaction carbamoyl phosphate + L-aspartate = N-carbamoyl-L-aspartate + phosphate + H(+). It participates in pyrimidine metabolism; UMP biosynthesis via de novo pathway; (S)-dihydroorotate from bicarbonate: step 2/3. In terms of biological role, catalyzes the condensation of carbamoyl phosphate and aspartate to form carbamoyl aspartate and inorganic phosphate, the committed step in the de novo pyrimidine nucleotide biosynthesis pathway. In Leptospira borgpetersenii serovar Hardjo-bovis (strain JB197), this protein is Aspartate carbamoyltransferase catalytic subunit.